Reading from the N-terminus, the 262-residue chain is Glutamate racemase (262 aa).

Substrate is bound by residues 5–6 (DS) and 37–38 (YG). Cys-69 serves as the catalytic Proton donor/acceptor. Residue 70 to 71 (NT) participates in substrate binding. The active-site Proton donor/acceptor is the Cys-181. 182-183 (TH) lines the substrate pocket.

The protein belongs to the aspartate/glutamate racemases family.

The enzyme catalyses L-glutamate = D-glutamate. It participates in cell wall biogenesis; peptidoglycan biosynthesis. Its function is as follows. Provides the (R)-glutamate required for cell wall biosynthesis. The chain is Glutamate racemase from Buchnera aphidicola subsp. Acyrthosiphon pisum (strain 5A).